A 357-amino-acid chain; its full sequence is 3-isopropylmalate dehydrogenase (357 aa).

An NAD(+)-binding site is contributed by 77–90; sequence GPKWDTLPGEKRPE. Substrate-binding residues include Arg-97, Arg-107, Arg-136, and Asp-224. Asp-224, Asp-248, and Asp-252 together coordinate Mg(2+). 282–294 lines the NAD(+) pocket; it reads GSAPDIAGQDLAN.

It belongs to the isocitrate and isopropylmalate dehydrogenases family. LeuB type 1 subfamily. Homodimer. Mg(2+) is required as a cofactor. The cofactor is Mn(2+).

The protein localises to the cytoplasm. It carries out the reaction (2R,3S)-3-isopropylmalate + NAD(+) = 4-methyl-2-oxopentanoate + CO2 + NADH. It functions in the pathway amino-acid biosynthesis; L-leucine biosynthesis; L-leucine from 3-methyl-2-oxobutanoate: step 3/4. In terms of biological role, catalyzes the oxidation of 3-carboxy-2-hydroxy-4-methylpentanoate (3-isopropylmalate) to 3-carboxy-4-methyl-2-oxopentanoate. The product decarboxylates to 4-methyl-2 oxopentanoate. This Clostridium acetobutylicum (strain ATCC 824 / DSM 792 / JCM 1419 / IAM 19013 / LMG 5710 / NBRC 13948 / NRRL B-527 / VKM B-1787 / 2291 / W) protein is 3-isopropylmalate dehydrogenase.